We begin with the raw amino-acid sequence, 223 residues long: Cytidylate kinase (223 aa).

ATP is bound at residue 17 to 25 (GPTASGKGT).

Belongs to the cytidylate kinase family. Type 1 subfamily.

It is found in the cytoplasm. The enzyme catalyses CMP + ATP = CDP + ADP. It carries out the reaction dCMP + ATP = dCDP + ADP. The protein is Cytidylate kinase of Bordetella bronchiseptica (strain ATCC BAA-588 / NCTC 13252 / RB50) (Alcaligenes bronchisepticus).